The sequence spans 398 residues: Bifunctional enzyme IspD/IspF (398 aa).

The tract at residues M1–I234 is 2-C-methyl-D-erythritol 4-phosphate cytidylyltransferase. The segment at R235–T398 is 2-C-methyl-D-erythritol 2,4-cyclodiphosphate synthase. A divalent metal cation contacts are provided by D241 and H243. 4-CDP-2-C-methyl-D-erythritol 2-phosphate is bound by residues D241 to H243 and H267 to S268. An a divalent metal cation-binding site is contributed by H275. Residues D289 to G291, T365 to E368, F372, and R375 each bind 4-CDP-2-C-methyl-D-erythritol 2-phosphate.

It in the N-terminal section; belongs to the IspD/TarI cytidylyltransferase family. IspD subfamily. The protein in the C-terminal section; belongs to the IspF family. Requires a divalent metal cation as cofactor.

The enzyme catalyses 2-C-methyl-D-erythritol 4-phosphate + CTP + H(+) = 4-CDP-2-C-methyl-D-erythritol + diphosphate. It catalyses the reaction 4-CDP-2-C-methyl-D-erythritol 2-phosphate = 2-C-methyl-D-erythritol 2,4-cyclic diphosphate + CMP. The protein operates within isoprenoid biosynthesis; isopentenyl diphosphate biosynthesis via DXP pathway; isopentenyl diphosphate from 1-deoxy-D-xylulose 5-phosphate: step 2/6. It functions in the pathway isoprenoid biosynthesis; isopentenyl diphosphate biosynthesis via DXP pathway; isopentenyl diphosphate from 1-deoxy-D-xylulose 5-phosphate: step 4/6. Its function is as follows. Bifunctional enzyme that catalyzes the formation of 4-diphosphocytidyl-2-C-methyl-D-erythritol from CTP and 2-C-methyl-D-erythritol 4-phosphate (MEP) (IspD), and catalyzes the conversion of 4-diphosphocytidyl-2-C-methyl-D-erythritol 2-phosphate (CDP-ME2P) to 2-C-methyl-D-erythritol 2,4-cyclodiphosphate (ME-CPP) with a corresponding release of cytidine 5-monophosphate (CMP) (IspF). This is Bifunctional enzyme IspD/IspF from Nitrobacter winogradskyi (strain ATCC 25391 / DSM 10237 / CIP 104748 / NCIMB 11846 / Nb-255).